Reading from the N-terminus, the 487-residue chain is MVPVIALVGRPNVGKSTMFNRLTKTRDAIVGDLSGLTRDRQYGDASWQGRSFILIDTGGITGDEVGMDEKMAEQSLMAIEEADYVLFLVDARAGMTAADQMIAEHLRKRNKAAILVANKIDNIDPDVARAEFSPMGMGNAIPVAGSQGRGINALMEAVLGHLPRDAEEEALEQDVAEGEEAVRIPGPSEKDGIKIAIIGRPNVGKSTLVNRMLGEERVVVYDEPGTTRDSIYIPFERDGEKYTFIDTAGVRKRGKIHEEVEKFSVVKTLQAIKDANVVIFVMDAREGVVDHDLNLLGFALEAGRAIVIALNKWDGMEPGERAYVKTELERRLFFVDFADIHFISALHGTGVGNLYKSVQAAFQSAVTRWPTSRLTQILEDAVSEHQPPMVNGRRIKLRYAHLGGANPPLIVIHGNQTDSIPKSYSRYLENTYRRVLKLVGTPIRIEYKGGENPYEGKKNTLTDRQVNKKRRLMSHHKKAEKKRRDKR.

EngA-type G domains lie at 3-166 (PVIA…PRDA) and 193-366 (IKIA…QSAV). GTP-binding positions include 9 to 16 (GRPNVGKS), 56 to 60 (DTGGI), 118 to 121 (NKID), 199 to 206 (GRPNVGKS), 246 to 250 (DTAGV), and 311 to 314 (NKWD). Positions 367–451 (TRWPTSRLTQ…PIRIEYKGGE (85 aa)) constitute a KH-like domain. Residues 448-461 (KGGENPYEGKKNTL) are compositionally biased toward basic and acidic residues. Residues 448–487 (KGGENPYEGKKNTLTDRQVNKKRRLMSHHKKAEKKRRDKR) form a disordered region. The segment covering 467 to 487 (NKKRRLMSHHKKAEKKRRDKR) has biased composition (basic residues).

This sequence belongs to the TRAFAC class TrmE-Era-EngA-EngB-Septin-like GTPase superfamily. EngA (Der) GTPase family. As to quaternary structure, associates with the 50S ribosomal subunit.

Functionally, GTPase that plays an essential role in the late steps of ribosome biogenesis. In Pseudomonas putida (strain ATCC 47054 / DSM 6125 / CFBP 8728 / NCIMB 11950 / KT2440), this protein is GTPase Der.